A 573-amino-acid chain; its full sequence is Glutathione hydrolase 5 proenzyme (573 aa).

Residues 1-8 are Cytoplasmic-facing; it reads MAWGHRAT. Residues 9 to 29 form a helical; Signal-anchor for type II membrane protein membrane-spanning segment; sequence VCLVLLGVGLGLVIVVLAAVL. Topologically, residues 30 to 573 are extracellular; it reads SPRQASCGPG…LRKAGKASGY (544 aa). N-linked (GlcNAc...) asparagine glycosylation is present at N98. Residue R110 coordinates L-glutamate. Residues N185, N204, N277, N303, N347, and N378 are each glycosylated (N-linked (GlcNAc...) asparagine). The Nucleophile role is filled by T389. L-glutamate contacts are provided by residues T407, E428, and 454-455; that span reads SS.

The protein belongs to the gamma-glutamyltransferase family. Heterodimer composed of the light and heavy chains. The active site is located in the light chain. Post-translationally, cleaved by autocatalysis into a large and a small subunit. In terms of processing, glycosylated. Very low level of expression. Detected in spleen lymphocytes, medullary and paracortical thymic lymphocytes, lung interstitial cells, bronchial epithelium, proximal tubules in kidney, crypt cells in small intestine, neurons in brain stem and cerebral cortex and in Purkinje cells. In terms of tissue distribution, very low expression.

The protein resides in the membrane. It carries out the reaction glutathione + H2O = L-cysteinylglycine + L-glutamate. The enzyme catalyses an S-substituted glutathione + H2O = an S-substituted L-cysteinylglycine + L-glutamate. It catalyses the reaction leukotriene C4 + H2O = leukotriene D4 + L-glutamate. The catalysed reaction is S-[(2E,6E,10E)-geranylgeranyl]-L-glutathione + H2O = S-[(2E,6E,10E)-geranylgeranyl]-L-cysteinylglycine + L-glutamate. It carries out the reaction an N-terminal (5-L-glutamyl)-[peptide] + an alpha-amino acid = 5-L-glutamyl amino acid + an N-terminal L-alpha-aminoacyl-[peptide]. It participates in lipid metabolism; leukotriene D4 biosynthesis. Its pathway is sulfur metabolism; glutathione metabolism. With respect to regulation, inhibited by serine-borate. Its function is as follows. Cleaves the gamma-glutamyl bond of extracellular glutathione tripeptide (gamma-Glu-Cys-Gly) and certain glutathione conjugates. Hydrolyzes glutathione releasing L-Glu and Cys-Gly dipeptide which is further metabolized to maintain extracellular cysteine levels but also to provide cysteine necessary for intracellular glutathione synthesis. Among glutathione-S-conjugates metabolizes leukotriene C4 (LTC4) and S-geranylgeranyl-glutathione (GGG), but is inactive toward gamma-glutamyl leucine. Converts extracellular LTC4 to LTD4 during acute inflammatory response. Acts as a negative regulator of GGG bioactivity. GGT5 (via GGG catabolism) and ABCC1 (via extracellular transport) establish GGG gradients within lymphoid tissues to position P2RY8-positive lymphocytes at germinal centers in lymphoid follicles and restrict their chemotactic transmigration from blood vessels to bone marrow parenchyma. The transpeptidation reaction, i.e. the transfer of gamma-glutamyl moiety to an acceptor molecule to yield a new gamma-glutamyl compound requires high concentration of dipeptide acceptor and is considered nonphysiological. The chain is Glutathione hydrolase 5 proenzyme (Ggt5) from Mus musculus (Mouse).